The primary structure comprises 237 residues: V-type proton ATPase subunit E3 (237 aa).

An N-acetylmethionine modification is found at methionine 1. Residues 9–67 are a coiled coil; it reads QIQQMVRFIRQEAEEKANEISISSEEEFNIEKLQLVEAEKKKIRQEYEKKEKQVDVRKK.

It belongs to the V-ATPase E subunit family. As to quaternary structure, V-ATPase is a heteromultimeric enzyme composed of a peripheral catalytic V1 complex (components A to H) attached to an integral membrane V0 proton pore complex (components: a, c, c'', d and e).

Its subcellular location is the vacuole membrane. Subunit of the peripheral V1 complex of vacuolar ATPase essential for assembly or catalytic function. V-ATPase is responsible for acidifying a variety of intracellular compartments in eukaryotic cells. This Arabidopsis thaliana (Mouse-ear cress) protein is V-type proton ATPase subunit E3 (VHA-E3).